A 135-amino-acid polypeptide reads, in one-letter code: Translation initiation factor 2 subunit beta (135 aa).

The protein belongs to the eIF-2-beta/eIF-5 family. In terms of assembly, heterotrimer composed of an alpha, a beta and a gamma chain.

Its function is as follows. eIF-2 functions in the early steps of protein synthesis by forming a ternary complex with GTP and initiator tRNA. This chain is Translation initiation factor 2 subunit beta, found in Methanobrevibacter smithii (strain ATCC 35061 / DSM 861 / OCM 144 / PS).